Here is a 404-residue protein sequence, read N- to C-terminus: SAC3 domain-containing protein 1 (404 aa).

Disordered stretches follow at residues 1 to 58 (MAGR…GTCP) and 77 to 117 (RLEV…QLRP). A compositionally biased stretch (pro residues) spans 12–21 (PPRPAAPHPR). Positions 87-101 (DPPRADPQRAVKEYS) are enriched in basic and acidic residues. The PCI domain occupies 203–379 (QVQEGFGSLR…TCKVLVESKL (177 aa)). Ser402 bears the Phosphoserine mark.

It belongs to the SAC3 family. As to quaternary structure, may be part of a SEM1-containing complex.

The protein resides in the cytoplasm. It localises to the cytoskeleton. The protein localises to the microtubule organizing center. It is found in the centrosome. Its subcellular location is the spindle. Involved in centrosome duplication and mitotic progression. This is SAC3 domain-containing protein 1 (SAC3D1) from Homo sapiens (Human).